Reading from the N-terminus, the 173-residue chain is Archaemetzincin (173 aa).

His-130 is a binding site for Zn(2+). The active-site Proton acceptor is the Glu-131. Residues His-134, His-140, Cys-141, Cys-146, Cys-165, and Cys-168 each coordinate Zn(2+).

It belongs to the peptidase M54 family. As to quaternary structure, monomer. It depends on Zn(2+) as a cofactor.

In terms of biological role, probable zinc metalloprotease whose natural substrate is unknown. This chain is Archaemetzincin, found in Haloarcula marismortui (strain ATCC 43049 / DSM 3752 / JCM 8966 / VKM B-1809) (Halobacterium marismortui).